A 134-amino-acid polypeptide reads, in one-letter code: Large ribosomal subunit protein uL18 (134 aa).

The tract at residues 1-25 (MSNTAQNEKRLPVGKDISTRRRTAR) is disordered. A compositionally biased stretch (basic and acidic residues) spans 7–19 (NEKRLPVGKDIST).

Belongs to the universal ribosomal protein uL18 family. In terms of assembly, part of the 50S ribosomal subunit; part of the 5S rRNA/L5/L18/L25 subcomplex. Contacts the 5S and 23S rRNAs.

Functionally, this is one of the proteins that bind and probably mediate the attachment of the 5S RNA into the large ribosomal subunit, where it forms part of the central protuberance. This Corynebacterium jeikeium (strain K411) protein is Large ribosomal subunit protein uL18.